We begin with the raw amino-acid sequence, 151 residues long: MPKSPPRFLNSPLSDFFIKWMSRINTWMYRRNDGEGLGGTFQKIPVALLTTTGRKTGQPRVNPLYFLRDGGRVIVAASKGGAEKNPMWYLNLKANPKVQVQIKKEVLDLTARDATDEERAEYWPQLVTMYPSYQDYQSWTDRTIPIVVCEP.

Coenzyme F420-(gamma-Glu)n contacts are provided by residues 54-56, 60-65, 76-79, 87-91, and Tyr-133; these read RKT, RVNPLY, AASK, and MWYLN.

Belongs to the F420H(2)-dependent quinone reductase family.

The protein resides in the cell membrane. The enzyme catalyses oxidized coenzyme F420-(gamma-L-Glu)(n) + a quinol + H(+) = reduced coenzyme F420-(gamma-L-Glu)(n) + a quinone. In terms of biological role, involved in a F420-dependent anti-oxidant mechanism that protects M.tuberculosis against oxidative stress and bactericidal agents. Catalyzes the F420H(2)-dependent two-electron reduction of quinones to dihydroquinones, thereby preventing the formation of cytotoxic semiquinones obtained by the one-electron reduction pathway. In vitro, catalyzes the reduction of both benzoquinone and naphthoquinone analogs; since menaquinone is the sole quinone electron carrier in the respiratory chain in M.tuberculosis, the physiological electron acceptor for Fqr-mediated F420H(2) oxidation is therefore likely to be the endogenous menaquinone found in the membrane fraction of M.tuberculosis. Is able to use F420 species with two and five glutamate residues in its polyglutamate tail. Cannot use NADH or NADPH instead of F420H(2) as the electron donor. Is involved in the bioreductive activation of bicyclic 4-nitroimidazole prodrugs such as PA-824 and delamanid developed for anti-tuberculosis therapy against both replicating and persistent bacteria. It converts PA-824 into three primary metabolites resulting from reduction of the imidazole ring at C-3; the major one is the corresponding des-nitroimidazole that generates lethal reactive nitrogen species, including nitric oxide (NO), which appears to be responsible for the anaerobic killing activity. Ddn uses the reduced F420 produced by FGD1 to activate PA-824. Delamanid (OPC-67683) is also reduced by Ddn to its des-nitro form. The protein is Deazaflavin-dependent nitroreductase (ddn) of Mycobacterium tuberculosis (strain CDC 1551 / Oshkosh).